Consider the following 446-residue polypeptide: Signal recognition particle protein (446 aa).

GTP contacts are provided by residues 108–115, 191–195, and 249–252; these read GLQGAGKT, DTAGR, and TKLD.

The protein belongs to the GTP-binding SRP family. SRP54 subfamily. In terms of assembly, part of the signal recognition particle protein translocation system, which is composed of SRP and FtsY. Interacts with a small cytoplasmic RNA (sc-RNA).

It localises to the cytoplasm. It carries out the reaction GTP + H2O = GDP + phosphate + H(+). Functionally, involved in targeting and insertion of nascent membrane proteins into the cytoplasmic membrane. Binds to the hydrophobic signal sequence of the ribosome-nascent chain (RNC) as it emerges from the ribosomes. The SRP-RNC complex is then targeted to the cytoplasmic membrane where it interacts with the SRP receptor FtsY. Interaction with FtsY leads to the transfer of the RNC complex to the Sec translocase for insertion into the membrane, the hydrolysis of GTP by both Ffh and FtsY, and the dissociation of the SRP-FtsY complex into the individual components. This is Signal recognition particle protein from Bacillus subtilis (strain 168).